An 885-amino-acid polypeptide reads, in one-letter code: Rho GTPase-activating protein gacFF (885 aa).

Positions 168 to 182 (TTTNNSNNSNSNNNN) are enriched in low complexity. The interval 168 to 187 (TTTNNSNNSNSNNNNKQYNS) is disordered. The stretch at 222-249 (LINKIQNDSEQLKLVLSQVEQQIEFLKS) forms a coiled coil. The F-box domain occupies 348-394 (SDIFSLLPTHLTLYVFSYLEPKELLILAQVSSQWQKLAGDNLLWVRF). In terms of domain architecture, PH spans 464–571 (SSSKEGWLYK…WMILLNSIIK (108 aa)). Low complexity-rich tracts occupy residues 594–622 (NNVYINNNNNNNNNNNNNNNNNNNNNNNN) and 629–648 (LPPLLSKSPSFSNALTSSTG). The interval 594–680 (NNVYINNNNN…GGGSGGNNNF (87 aa)) is disordered. In terms of domain architecture, Rho-GAP spans 701-885 (VALSKILENQ…KYYDEIFIKK (185 aa)).

Its subcellular location is the cytoplasm. Its function is as follows. Rho GTPase-activating protein involved in the signal transduction pathway. The sequence is that of Rho GTPase-activating protein gacFF (gacFF) from Dictyostelium discoideum (Social amoeba).